The chain runs to 640 residues: PAN2-PAN3 deadenylation complex subunit PAN3 (640 aa).

A C3H1-type zinc finger spans residues 17–46 (ENKDILCRNVLIYGHCRYEDQGCTYNHDQN). 2 stretches are compositionally biased toward polar residues: residues 43 to 53 (HDQNKNSSQPE) and 63 to 87 (DSPS…SQAA). The tract at residues 43–101 (HDQNKNSSQPEAPSKKMFNVDSPSFTPSGQSTVLPKKTTLSSQAASAAPFTPRGGGTPT) is disordered. The tract at residues 237–498 (QVIPNSGLPQ…TIEHFMTGIA (262 aa)) is pseudokinase domain. Residues Asn-263, Arg-288, 338 to 345 (DFHPLSKT), and 397 to 398 (SK) contribute to the ATP site. Residues 499–537 (SQMTTFFDLALQDNDEKLFHLAREVENGRIARSLMKLLT) are a coiled coil. The knob domain stretch occupies residues 538-640 (ILERGDYDGV…SKTGAPGANT (103 aa)).

It belongs to the protein kinase superfamily. PAN3 family. In terms of assembly, homodimer. Forms a heterotrimer with a catalytic subunit PAN2 to form the poly(A)-nuclease (PAN) deadenylation complex. Interacts (via PAM-2 motif) with poly(A)-binding protein PAB1 (via PABC domain), conferring substrate specificity of the enzyme complex.

The protein localises to the cytoplasm. In terms of biological role, regulatory subunit of the poly(A)-nuclease (PAN) deadenylation complex, one of two cytoplasmic mRNA deadenylases involved in mRNA turnover. PAN specifically shortens poly(A) tails of RNA and the activity is stimulated by poly(A)-binding protein PAB1. PAN deadenylation is followed by rapid degradation of the shortened mRNA tails by the CCR4-NOT complex. Deadenylated mRNAs are then degraded by two alternative mechanisms, namely exosome-mediated 3'-5' exonucleolytic degradation, or deadenylation-dependent mRNA decaping and subsequent 5'-3' exonucleolytic degradation by XRN1. May also be involved in post-transcriptional maturation of mRNA poly(A) tails. PAN3 acts as a positive regulator for PAN activity, recruiting the catalytic subunit PAN2 to mRNA via its interaction with RNA and with PAB1. In Chaetomium thermophilum (strain DSM 1495 / CBS 144.50 / IMI 039719) (Thermochaetoides thermophila), this protein is PAN2-PAN3 deadenylation complex subunit PAN3.